Here is a 327-residue protein sequence, read N- to C-terminus: GTP 3',8-cyclase (327 aa).

A Radical SAM core domain is found at 8–232 (AFARKFYYLR…LQRSRSDGPA (225 aa)). Residue arginine 17 participates in GTP binding. Residues cysteine 24 and cysteine 28 each contribute to the [4Fe-4S] cluster site. Tyrosine 30 is an S-adenosyl-L-methionine binding site. Cysteine 31 provides a ligand contact to [4Fe-4S] cluster. Arginine 66 serves as a coordination point for GTP. Residue glycine 70 participates in S-adenosyl-L-methionine binding. A GTP-binding site is contributed by threonine 97. Serine 121 is an S-adenosyl-L-methionine binding site. Lysine 158 is a GTP binding site. Methionine 192 serves as a coordination point for S-adenosyl-L-methionine. [4Fe-4S] cluster is bound by residues cysteine 255 and cysteine 258. 260–262 (RLR) contributes to the GTP binding site. Cysteine 272 lines the [4Fe-4S] cluster pocket.

Belongs to the radical SAM superfamily. MoaA family. Monomer and homodimer. The cofactor is [4Fe-4S] cluster.

It carries out the reaction GTP + AH2 + S-adenosyl-L-methionine = (8S)-3',8-cyclo-7,8-dihydroguanosine 5'-triphosphate + 5'-deoxyadenosine + L-methionine + A + H(+). It functions in the pathway cofactor biosynthesis; molybdopterin biosynthesis. Its function is as follows. Catalyzes the cyclization of GTP to (8S)-3',8-cyclo-7,8-dihydroguanosine 5'-triphosphate. The chain is GTP 3',8-cyclase from Photorhabdus laumondii subsp. laumondii (strain DSM 15139 / CIP 105565 / TT01) (Photorhabdus luminescens subsp. laumondii).